The sequence spans 104 residues: Cytochrome c oxidase assembly factor 6 (104 aa).

The interval 1–22 (MGLFSFDGGKKESQPPNTRSQR) is disordered. One can recognise a CHCH domain in the interval 22–76 (RKLCWESRDAFFQCLDKADILDAMDPKNSKSIKSHCKVENEKFEENCAHSWIKYF). Residues 25–35 (CWESRDAFFQC) carry the Cx9C motif motif. Intrachain disulfides connect Cys-25–Cys-68 and Cys-35–Cys-57. The short motif at 57–68 (CKVENEKFEENC) is the Cx10C motif element.

The protein belongs to the cytochrome c oxidase subunit 6B family. As to quaternary structure, interacts with COX2.

It is found in the cytoplasm. Its subcellular location is the nucleus. It localises to the mitochondrion intermembrane space. Its function is as follows. Involved in the maturation of the mitochondrial respiratory chain complex IV subunit MT-CO2/COX2. Thereby, may regulate early steps of complex IV assembly. Mitochondrial respiratory chain complex IV or cytochrome c oxidase is the component of the respiratory chain that catalyzes the transfer of electrons from intermembrane space cytochrome c to molecular oxygen in the matrix and as a consequence contributes to the proton gradient involved in mitochondrial ATP synthesis. May also be required for efficient formation of respiratory supercomplexes comprised of complexes III and IV. The protein is Cytochrome c oxidase assembly factor 6 of Saccharomyces cerevisiae (strain ATCC 204508 / S288c) (Baker's yeast).